The sequence spans 149 residues: Transcriptional repressor NrdR (149 aa).

The segment at 3-34 (CPFCAAEETKVVDSRLAADGYQIRRRRECTSC) is a zinc-finger region. One can recognise an ATP-cone domain in the interval 49–139 (PYVIKNNGNR…VYLSFDDIEE (91 aa)).

It belongs to the NrdR family. It depends on Zn(2+) as a cofactor.

In terms of biological role, negatively regulates transcription of bacterial ribonucleotide reductase nrd genes and operons by binding to NrdR-boxes. This is Transcriptional repressor NrdR from Actinobacillus pleuropneumoniae serotype 5b (strain L20).